The following is a 165-amino-acid chain: Putative TRAP transporter small permease protein HI_0051 (165 aa).

4 helical membrane passes run 20–40 (LEYL…FNSV), 51–71 (FSEE…IILV), 94–114 (IVLI…AYGA), and 136–156 (LYLA…FSMI).

It belongs to the TRAP transporter small permease family.

Its subcellular location is the cell inner membrane. This is Putative TRAP transporter small permease protein HI_0051 from Haemophilus influenzae (strain ATCC 51907 / DSM 11121 / KW20 / Rd).